We begin with the raw amino-acid sequence, 1099 residues long: Carbamoyl phosphate synthase large chain (1099 aa).

The segment at 1–402 (MPKREDIKRI…ALGKALRSLE (402 aa)) is carboxyphosphate synthetic domain. Positions 129, 169, 175, 176, 208, 210, 215, 241, 242, 243, 285, and 299 each coordinate ATP. Positions 133–328 (KETMEKAGLE…IAKVAALLAV (196 aa)) constitute an ATP-grasp 1 domain. Residues Gln-285, Glu-299, and Asn-301 each contribute to the Mg(2+) site. 3 residues coordinate Mn(2+): Gln-285, Glu-299, and Asn-301. Positions 403-541 (LDAAPKLDLE…STYNGVENEA (139 aa)) are oligomerization domain. The interval 542-944 (VPSDREKIMI…AFAKAQIAAG (403 aa)) is carbamoyl phosphate synthetic domain. Positions 666–857 (AKLLKQIGLK…VARIAAKIMV (192 aa)) constitute an ATP-grasp 2 domain. 10 residues coordinate ATP: Arg-702, Lys-741, Leu-743, Glu-748, Gly-773, Val-774, His-775, Ser-776, Gln-816, and Glu-828. Mg(2+)-binding residues include Gln-816, Glu-828, and Asn-830. 3 residues coordinate Mn(2+): Gln-816, Glu-828, and Asn-830. Residues 945 to 1099 (NPLPTTGAIL…VRRLTDTWKM (155 aa)) form the MGS-like domain. The segment at 945 to 1099 (NPLPTTGAIL…VRRLTDTWKM (155 aa)) is allosteric domain.

Belongs to the CarB family. Composed of two chains; the small (or glutamine) chain promotes the hydrolysis of glutamine to ammonia, which is used by the large (or ammonia) chain to synthesize carbamoyl phosphate. Tetramer of heterodimers (alpha,beta)4. Mg(2+) serves as cofactor. The cofactor is Mn(2+).

The catalysed reaction is hydrogencarbonate + L-glutamine + 2 ATP + H2O = carbamoyl phosphate + L-glutamate + 2 ADP + phosphate + 2 H(+). It carries out the reaction hydrogencarbonate + NH4(+) + 2 ATP = carbamoyl phosphate + 2 ADP + phosphate + 2 H(+). The protein operates within amino-acid biosynthesis; L-arginine biosynthesis; carbamoyl phosphate from bicarbonate: step 1/1. It participates in pyrimidine metabolism; UMP biosynthesis via de novo pathway; (S)-dihydroorotate from bicarbonate: step 1/3. Large subunit of the glutamine-dependent carbamoyl phosphate synthetase (CPSase). CPSase catalyzes the formation of carbamoyl phosphate from the ammonia moiety of glutamine, carbonate, and phosphate donated by ATP, constituting the first step of 2 biosynthetic pathways, one leading to arginine and/or urea and the other to pyrimidine nucleotides. The large subunit (synthetase) binds the substrates ammonia (free or transferred from glutamine from the small subunit), hydrogencarbonate and ATP and carries out an ATP-coupled ligase reaction, activating hydrogencarbonate by forming carboxy phosphate which reacts with ammonia to form carbamoyl phosphate. This is Carbamoyl phosphate synthase large chain from Thermotoga sp. (strain RQ2).